The chain runs to 541 residues: Chaperonin GroEL 2 (541 aa).

Residues 30 to 33 (TLGP), lysine 51, 87 to 91 (DGTTT), glycine 415, and aspartate 496 each bind ATP.

This sequence belongs to the chaperonin (HSP60) family. Forms a cylinder of 14 subunits composed of two heptameric rings stacked back-to-back. Interacts with the co-chaperonin GroES.

Its subcellular location is the cytoplasm. It carries out the reaction ATP + H2O + a folded polypeptide = ADP + phosphate + an unfolded polypeptide.. In terms of biological role, together with its co-chaperonin GroES, plays an essential role in assisting protein folding. The GroEL-GroES system forms a nano-cage that allows encapsulation of the non-native substrate proteins and provides a physical environment optimized to promote and accelerate protein folding. This Gluconacetobacter diazotrophicus (strain ATCC 49037 / DSM 5601 / CCUG 37298 / CIP 103539 / LMG 7603 / PAl5) protein is Chaperonin GroEL 2.